The primary structure comprises 215 residues: MDFYYMPGGGGCRTVIMVAKALGLELNKKLLNTMEGEQLKPEFVKLNPQHTIPTLVDNGFSIWESRAIAVYLVEKYGKDDYLLPNDPKKRAVINQRLYFDMGTLYESFAKYYYPLFRTGKPGSDEDLKRIETAFGFLDTFLEGQEYVAGDQLTVADIAILSTVSTFEVSEFDFSKYSNVSRWYDNAKKVTPGWDENWEGLMAMKALFDARKLAAK.

The GST N-terminal domain maps to M1–D80. Glutathione contacts are provided by residues H50–I52 and E64–R66. One can recognise a GST C-terminal domain in the interval D86 to L212.

The protein belongs to the GST superfamily. Delta family. In terms of assembly, homodimer.

The catalysed reaction is RX + glutathione = an S-substituted glutathione + a halide anion + H(+). Its function is as follows. Conjugation of reduced glutathione to a wide number of exogenous and endogenous hydrophobic electrophiles. May be involved in detoxification. The polypeptide is Glutathione S-transferase D2 (Drosophila melanogaster (Fruit fly)).